A 203-amino-acid polypeptide reads, in one-letter code: MEGAELIIQEINREAEQKIQYILSEAKEEAEKLKEEARKRAEAKAEWILRKAKTQAEIEKQRIIANAKLEVRKKKLAVQEELIRSVIESLKERLANLPEDEYFPMLVELTVKAVEELGTDKVVVRSNERTLKLIVERLSEFREKLREALGKDVEVTVGEPIQTIGGILVESSDGTVRVDNTFDSRIERFESDLRATIAKALFG.

Belongs to the V-ATPase E subunit family. Has multiple subunits with at least A(3), B(3), C, D, E, F, H, I and proteolipid K(x).

The protein localises to the cell membrane. In terms of biological role, component of the A-type ATP synthase that produces ATP from ADP in the presence of a proton gradient across the membrane. The protein is A-type ATP synthase subunit E of Desulfurococcus sp. (strain SY).